The following is a 404-amino-acid chain: LL-diaminopimelate aminotransferase (404 aa).

Substrate-binding residues include Tyr15 and Gly42. Pyridoxal 5'-phosphate is bound by residues Tyr72, Ala108–Lys109, Tyr132, Asn188, Tyr219, and Ser247–Ser249. Residues Lys109, Tyr132, and Asn188 each contribute to the substrate site. Lys250 carries the N6-(pyridoxal phosphate)lysine modification. Arg258 and Asn288 together coordinate pyridoxal 5'-phosphate. Asn288 and Arg384 together coordinate substrate.

The protein belongs to the class-I pyridoxal-phosphate-dependent aminotransferase family. LL-diaminopimelate aminotransferase subfamily. In terms of assembly, homodimer. It depends on pyridoxal 5'-phosphate as a cofactor.

It catalyses the reaction (2S,6S)-2,6-diaminopimelate + 2-oxoglutarate = (S)-2,3,4,5-tetrahydrodipicolinate + L-glutamate + H2O + H(+). The protein operates within amino-acid biosynthesis; L-lysine biosynthesis via DAP pathway; LL-2,6-diaminopimelate from (S)-tetrahydrodipicolinate (aminotransferase route): step 1/1. Its function is as follows. Involved in the synthesis of meso-diaminopimelate (m-DAP or DL-DAP), required for both lysine and peptidoglycan biosynthesis. Catalyzes the direct conversion of tetrahydrodipicolinate to LL-diaminopimelate. The polypeptide is LL-diaminopimelate aminotransferase (Lachnospira eligens (strain ATCC 27750 / DSM 3376 / VPI C15-48 / C15-B4) (Eubacterium eligens)).